A 1077-amino-acid polypeptide reads, in one-letter code: Histone deacetylase 4 (1077 aa).

Positions 66 to 169 (REQQLQQELL…GKESAVASTE (104 aa)) form a coiled coil. The interaction with MEF2A stretch occupies residues 117 to 312 (MLAMKHQQEL…NSSSGNVSTE (196 aa)). Basic and acidic residues predominate over residues 132–162 (KLERHRQEQELEKQHREQKLQQLKNKEKGKE). Disordered regions lie at residues 132-167 (KLER…AVAS), 204-225 (KTQH…ASYN), and 239-327 (PLRK…AETS). Residues 205 to 224 (TQHSSLDQSSPPQSGVSASY) are compositionally biased toward polar residues. Phosphoserine is present on S209. Position 245 is a phosphoserine; by CaMK4 and SIK1 (S245). The span at 258–273 (KVAERRSSPLLRRKDG) shows a compositional bias: basic and acidic residues. A compositionally biased stretch (low complexity) spans 289–310 (SACSSAPGSGPSSPNSSSGNVS). The PxLPxI/L motif; mediates interaction with ANKRA2 and 14-3-3 proteins signature appears at 348–353 (PSLPNI). The residue at position 349 (S349) is a Phosphoserine. At S466 the chain carries Phosphoserine; by CaMK4 and SIK1. Disordered regions lie at residues 508–530 (SKPS…ELRE), 542–582 (RLPG…RPAT), and 623–646 (RPLS…EPPT). Positions 515–530 (RQPESHPEETEEELRE) are enriched in basic and acidic residues. K557 participates in a covalent cross-link: Glycyl lysine isopeptide (Lys-Gly) (interchain with G-Cter in SUMO). Phosphoserine occurs at positions 563, 630, and 631. A compositionally biased stretch (polar residues) spans 627 to 639 (RAQSSPASATFPM). The histone deacetylase stretch occupies residues 653-1077 (GLVYDTLMLK…EEPMEEEPPL (425 aa)). Zn(2+) contacts are provided by C665, C667, H673, and C744. Residue H796 is part of the active site. Positions 1044–1077 (EEAETVTAMASLSVGVKPAEKRSEEEPMEEEPPL) match the Nuclear export signal motif. A disordered region spans residues 1052-1077 (MASLSVGVKPAEKRSEEEPMEEEPPL).

It belongs to the histone deacetylase family. HD type 2 subfamily. In terms of assembly, homodimer. Homodimerization via its N-terminal domain. Interacts with HDAC7. Interacts with MEF2A, MEF2C, MEF2D, MORC2 and NR2C1. Interacts with a 14-3-3 chaperone proteins in a phosphorylation dependent manner. Interacts with 14-3-3 protein YWHAB. Interacts with KDM5B and AHRR. Interacts with BTBD14B. Interacts with MYOCD. Interacts (via PxLPxI/L motif) with ANKRA2 (via ankyrin repeats). Interacts with CUL7 (as part of the 3M complex); negatively regulated by ANKRA2. Interacts with EP300 in the presence of TFAP2C. Interacts with HSPA1A and HSPA1B leading to their deacetylation at 'Lys-77'. Interacts with ZBTB7B; the interaction allows the recruitment of HDAC4 on CD8 loci for deacetylation and possible inhibition of CD8 genes expression. Interacts with DHX36. Interacts with SIK3; this interaction leads to HDAC4 retention in the cytoplasm. Phosphorylated by CaMK4 at Ser-245, Ser-466 and Ser-630. Phosphorylation at other residues by CaMK2D is required for the interaction with 14-3-3. Phosphorylation at Ser-349, within the PxLPxI/L motif, impairs the binding of ANKRA2 but generates a high-affinity docking site for 14-3-3. Post-translationally, sumoylation on Lys-557 is promoted by the E3 SUMO-protein ligase RANBP2, and prevented by phosphorylation by CaMK4.

Its subcellular location is the nucleus. It is found in the cytoplasm. It carries out the reaction N(6)-acetyl-L-lysyl-[histone] + H2O = L-lysyl-[histone] + acetate. Functionally, responsible for the deacetylation of lysine residues on the N-terminal part of the core histones (H2A, H2B, H3 and H4). Histone deacetylation gives a tag for epigenetic repression and plays an important role in transcriptional regulation, cell cycle progression and developmental events. Histone deacetylases act via the formation of large multiprotein complexes. Involved in muscle maturation via its interaction with the myocyte enhancer factors such as MEF2A, MEF2C and MEF2D. Deacetylates HSPA1A and HSPA1B at 'Lys-77' leading to their preferential binding to co-chaperone STUB1. The chain is Histone deacetylase 4 (Hdac4) from Rattus norvegicus (Rat).